The chain runs to 202 residues: NADH-quinone oxidoreductase subunit C (202 aa).

It belongs to the complex I 30 kDa subunit family. As to quaternary structure, NDH-1 is composed of 14 different subunits. Subunits NuoB, C, D, E, F, and G constitute the peripheral sector of the complex.

It is found in the cell inner membrane. It catalyses the reaction a quinone + NADH + 5 H(+)(in) = a quinol + NAD(+) + 4 H(+)(out). NDH-1 shuttles electrons from NADH, via FMN and iron-sulfur (Fe-S) centers, to quinones in the respiratory chain. The immediate electron acceptor for the enzyme in this species is believed to be ubiquinone. Couples the redox reaction to proton translocation (for every two electrons transferred, four hydrogen ions are translocated across the cytoplasmic membrane), and thus conserves the redox energy in a proton gradient. The sequence is that of NADH-quinone oxidoreductase subunit C from Brucella abortus (strain 2308).